Consider the following 431-residue polypeptide: Adenylosuccinate synthetase (431 aa).

Residues 21–27 and 49–51 each bind GTP; these read GDEGKGK and GHT. Aspartate 22 acts as the Proton acceptor in catalysis. Mg(2+) is bound by residues aspartate 22 and glycine 49. IMP-binding positions include 22–25, 47–50, threonine 138, arginine 152, asparagine 230, threonine 245, and arginine 309; these read DEGK and NAGH. The Proton donor role is filled by histidine 50. 305–311 lines the substrate pocket; the sequence is ATTGRPR. GTP-binding positions include arginine 311, 337 to 339, and 419 to 421; these read KLD and GNG.

Belongs to the adenylosuccinate synthetase family. As to quaternary structure, homodimer. The cofactor is Mg(2+).

The protein resides in the cytoplasm. The enzyme catalyses IMP + L-aspartate + GTP = N(6)-(1,2-dicarboxyethyl)-AMP + GDP + phosphate + 2 H(+). It participates in purine metabolism; AMP biosynthesis via de novo pathway; AMP from IMP: step 1/2. In terms of biological role, plays an important role in the de novo pathway and in the salvage pathway of purine nucleotide biosynthesis. Catalyzes the first committed step in the biosynthesis of AMP from IMP. This is Adenylosuccinate synthetase from Paramecium tetraurelia.